A 272-amino-acid chain; its full sequence is NAD kinase (272 aa).

The active-site Proton acceptor is the D50. NAD(+) contacts are provided by residues 50–51, 126–127, R152, D154, 165–170, and A189; these read DG, NE, and TAYNKS.

This sequence belongs to the NAD kinase family. The cofactor is a divalent metal cation.

It is found in the cytoplasm. It carries out the reaction NAD(+) + ATP = ADP + NADP(+) + H(+). In terms of biological role, involved in the regulation of the intracellular balance of NAD and NADP, and is a key enzyme in the biosynthesis of NADP. Catalyzes specifically the phosphorylation on 2'-hydroxyl of the adenosine moiety of NAD to yield NADP. The sequence is that of NAD kinase from Streptococcus pneumoniae (strain 70585).